We begin with the raw amino-acid sequence, 210 residues long: Small ribosomal subunit protein uS7 (210 aa).

The protein belongs to the universal ribosomal protein uS7 family. As to quaternary structure, component of the small ribosomal subunit. Part of the small subunit (SSU) processome, composed of more than 70 proteins and the RNA chaperone small nucleolar RNA (snoRNA) U3.

It is found in the cytoplasm. Its subcellular location is the nucleus. The protein localises to the nucleolus. In terms of biological role, component of the small ribosomal subunit. The ribosome is a large ribonucleoprotein complex responsible for the synthesis of proteins in the cell. Part of the small subunit (SSU) processome, first precursor of the small eukaryotic ribosomal subunit. During the assembly of the SSU processome in the nucleolus, many ribosome biogenesis factors, an RNA chaperone and ribosomal proteins associate with the nascent pre-rRNA and work in concert to generate RNA folding, modifications, rearrangements and cleavage as well as targeted degradation of pre-ribosomal RNA by the RNA exosome. In Caenorhabditis elegans, this protein is Small ribosomal subunit protein uS7 (rps-5).